The following is a 402-amino-acid chain: 1-deoxy-D-xylulose 5-phosphate reductoisomerase (402 aa).

NADPH contacts are provided by T13, G14, S15, I16, and N126. A 1-deoxy-D-xylulose 5-phosphate-binding site is contributed by K127. E128 lines the NADPH pocket. A Mn(2+)-binding site is contributed by D152. 1-deoxy-D-xylulose 5-phosphate is bound by residues S153, E154, S188, and H211. Residue E154 coordinates Mn(2+). G217 is a binding site for NADPH. 1-deoxy-D-xylulose 5-phosphate contacts are provided by S224, N229, K230, and E233. E233 lines the Mn(2+) pocket.

It belongs to the DXR family. The cofactor is Mg(2+). Mn(2+) is required as a cofactor.

It catalyses the reaction 2-C-methyl-D-erythritol 4-phosphate + NADP(+) = 1-deoxy-D-xylulose 5-phosphate + NADPH + H(+). It functions in the pathway isoprenoid biosynthesis; isopentenyl diphosphate biosynthesis via DXP pathway; isopentenyl diphosphate from 1-deoxy-D-xylulose 5-phosphate: step 1/6. In terms of biological role, catalyzes the NADPH-dependent rearrangement and reduction of 1-deoxy-D-xylulose-5-phosphate (DXP) to 2-C-methyl-D-erythritol 4-phosphate (MEP). This is 1-deoxy-D-xylulose 5-phosphate reductoisomerase from Psychrobacter cryohalolentis (strain ATCC BAA-1226 / DSM 17306 / VKM B-2378 / K5).